The chain runs to 320 residues: Cytochrome f (320 aa).

The first 35 residues, 1–35, serve as a signal peptide directing secretion; that stretch reads MQTRNTFSWIKEEITRSISVSLMIYIITGASISNA. Heme-binding residues include Y36, C56, C59, and H60. Residues 286–306 traverse the membrane as a helical segment; the sequence is VQGLLFFLASIVFAQIFLVLK.

This sequence belongs to the cytochrome f family. As to quaternary structure, the 4 large subunits of the cytochrome b6-f complex are cytochrome b6, subunit IV (17 kDa polypeptide, petD), cytochrome f and the Rieske protein, while the 4 small subunits are PetG, PetL, PetM and PetN. The complex functions as a dimer. Heme serves as cofactor.

The protein localises to the plastid. Its subcellular location is the chloroplast thylakoid membrane. Component of the cytochrome b6-f complex, which mediates electron transfer between photosystem II (PSII) and photosystem I (PSI), cyclic electron flow around PSI, and state transitions. In Gossypium hirsutum (Upland cotton), this protein is Cytochrome f.